A 320-amino-acid chain; its full sequence is o-succinylbenzoate synthase (320 aa).

Lysine 133 acts as the Proton donor in catalysis. Mg(2+) contacts are provided by aspartate 161, glutamate 190, and aspartate 213. The Proton acceptor role is filled by lysine 235.

This sequence belongs to the mandelate racemase/muconate lactonizing enzyme family. MenC type 1 subfamily. A divalent metal cation serves as cofactor.

It carries out the reaction (1R,6R)-6-hydroxy-2-succinyl-cyclohexa-2,4-diene-1-carboxylate = 2-succinylbenzoate + H2O. It functions in the pathway quinol/quinone metabolism; 1,4-dihydroxy-2-naphthoate biosynthesis; 1,4-dihydroxy-2-naphthoate from chorismate: step 4/7. Its pathway is quinol/quinone metabolism; menaquinone biosynthesis. Its function is as follows. Converts 2-succinyl-6-hydroxy-2,4-cyclohexadiene-1-carboxylate (SHCHC) to 2-succinylbenzoate (OSB). This chain is o-succinylbenzoate synthase, found in Salmonella typhi.